Here is a 384-residue protein sequence, read N- to C-terminus: Adaptive-response sensory kinase SasA (384 aa).

The region spanning 162 to 384 is the Histidine kinase domain; that stretch reads MLAHDLRSPL…SFHFTLPVYR (223 aa). H165 carries the phosphohistidine; by autocatalysis modification.

Homooligomerizes. Interacts with KaiC. Participates in the KaiABC clock complex, whose core is composed of a KaiC homohexamer, 6 KaiB and up to 6 KaiA dimers. SasA and KaiB(fs) compete to bind to KaiC.

The catalysed reaction is ATP + protein L-histidine = ADP + protein N-phospho-L-histidine.. Functionally, member of the two-component regulatory system SasA/RpaA involved in genome-wide circadian gene expression. One of several clock output pathways. Participates in the Kai clock protein complex, the main circadian regulator in cyanobacteria, via its interaction with KaiC. KaiC enhances the autophosphorylation activity of SasA, which then transfers its phosphate group to RpaA to activate it. In addition to its output function, recruits fold-shifted KaiB (KaiB(fs)) to KaiC to cooperatively form the KaiB(6):KaiC(6) complex (independent of SasA kinase activity). Required for robustness of the circadian rhythm of gene expression and is involved in clock output, also required for adaptation to light/dark cycles. The chain is Adaptive-response sensory kinase SasA from Microcystis aeruginosa (strain NIES-843 / IAM M-2473).